The primary structure comprises 104 residues: Large ribosomal subunit protein bL21 (104 aa).

The protein belongs to the bacterial ribosomal protein bL21 family. Part of the 50S ribosomal subunit. Contacts protein L20.

Functionally, this protein binds to 23S rRNA in the presence of protein L20. This is Large ribosomal subunit protein bL21 from Streptococcus sanguinis (strain SK36).